The primary structure comprises 156 residues: ATP synthase subunit b (156 aa).

A helical membrane pass occupies residues 7–29 (LFGQTVAFILFVWFCMKFVWPPL).

The protein belongs to the ATPase B chain family. F-type ATPases have 2 components, F(1) - the catalytic core - and F(0) - the membrane proton channel. F(1) has five subunits: alpha(3), beta(3), gamma(1), delta(1), epsilon(1). F(0) has three main subunits: a(1), b(2) and c(10-14). The alpha and beta chains form an alternating ring which encloses part of the gamma chain. F(1) is attached to F(0) by a central stalk formed by the gamma and epsilon chains, while a peripheral stalk is formed by the delta and b chains.

The protein localises to the cell inner membrane. Its function is as follows. F(1)F(0) ATP synthase produces ATP from ADP in the presence of a proton or sodium gradient. F-type ATPases consist of two structural domains, F(1) containing the extramembraneous catalytic core and F(0) containing the membrane proton channel, linked together by a central stalk and a peripheral stalk. During catalysis, ATP synthesis in the catalytic domain of F(1) is coupled via a rotary mechanism of the central stalk subunits to proton translocation. In terms of biological role, component of the F(0) channel, it forms part of the peripheral stalk, linking F(1) to F(0). The chain is ATP synthase subunit b from Shewanella frigidimarina (strain NCIMB 400).